A 612-amino-acid polypeptide reads, in one-letter code: MPVYRSRTTTHGRNMAGARGLWRATGMKDSDFGKPIIAVVNSFTQFVPGHVHLKDLGQLVAREIEAAGGVAKEFNTIAVDDGIAMGHDGMLYSLPSRELIADSVEYMVNAHCADAMVCISNCDKITPGMLMASLRLNIPTVFVSGGPMEAGKVVMHGKTHALDLVDAMVAAADDKISDEDVQTIERSACPTCGSCSGMFTANSMNCLTEALGLSLPGNGSTLATHLDRKRLFVEAGHLIVDLARRYYEQDDVKALPRTIASKQAFENAMTLDIAMGGSTNTVLHILAAAHEGEIDFTMADIDALSRRVPCLSKVAPAKSDVHMEDVHRAGGIMSILGELDKGGLLNRDCPTVHAETLGDAIDRWDITRTNSETVRKFYRAAPGGIPTQVAFSQEARWDELDTDRENGVIRSVEHPFSKDGGLAVLKGNLAIDGCIVKTAGVDESILKFSGPARVFESQDASVKAILANEVKAGDVVVIRYEGPKGGPGMQEMLYPTSYLKSKGLGKACALITDGRFSGGTSGLSIGHASPEAANGGTIGLVREGDMIDIDIPNRTISLRVSETELAARRAEQDAKGWYPTEVRKRNVTTALKAYAAFATSADRGAVRDLNVR.

Asp-81 contacts Mg(2+). Cys-122 contacts [2Fe-2S] cluster. Mg(2+) is bound by residues Asp-123 and Lys-124. Lys-124 is subject to N6-carboxylysine. Residue Cys-195 participates in [2Fe-2S] cluster binding. Glu-491 provides a ligand contact to Mg(2+). Ser-517 acts as the Proton acceptor in catalysis.

This sequence belongs to the IlvD/Edd family. In terms of assembly, homodimer. It depends on [2Fe-2S] cluster as a cofactor. Requires Mg(2+) as cofactor.

It catalyses the reaction (2R)-2,3-dihydroxy-3-methylbutanoate = 3-methyl-2-oxobutanoate + H2O. It carries out the reaction (2R,3R)-2,3-dihydroxy-3-methylpentanoate = (S)-3-methyl-2-oxopentanoate + H2O. It participates in amino-acid biosynthesis; L-isoleucine biosynthesis; L-isoleucine from 2-oxobutanoate: step 3/4. It functions in the pathway amino-acid biosynthesis; L-valine biosynthesis; L-valine from pyruvate: step 3/4. Its function is as follows. Functions in the biosynthesis of branched-chain amino acids. Catalyzes the dehydration of (2R,3R)-2,3-dihydroxy-3-methylpentanoate (2,3-dihydroxy-3-methylvalerate) into 2-oxo-3-methylpentanoate (2-oxo-3-methylvalerate) and of (2R)-2,3-dihydroxy-3-methylbutanoate (2,3-dihydroxyisovalerate) into 2-oxo-3-methylbutanoate (2-oxoisovalerate), the penultimate precursor to L-isoleucine and L-valine, respectively. The protein is Dihydroxy-acid dehydratase of Rhizobium johnstonii (strain DSM 114642 / LMG 32736 / 3841) (Rhizobium leguminosarum bv. viciae).